Consider the following 316-residue polypeptide: Bifunctional protein FolD (316 aa).

NADP(+) contacts are provided by residues 165 to 167 and Ile231; that span reads GKS.

The protein belongs to the tetrahydrofolate dehydrogenase/cyclohydrolase family. Homodimer.

It carries out the reaction (6R)-5,10-methylene-5,6,7,8-tetrahydrofolate + NADP(+) = (6R)-5,10-methenyltetrahydrofolate + NADPH. The catalysed reaction is (6R)-5,10-methenyltetrahydrofolate + H2O = (6R)-10-formyltetrahydrofolate + H(+). It functions in the pathway one-carbon metabolism; tetrahydrofolate interconversion. Its function is as follows. Catalyzes the oxidation of 5,10-methylenetetrahydrofolate to 5,10-methenyltetrahydrofolate and then the hydrolysis of 5,10-methenyltetrahydrofolate to 10-formyltetrahydrofolate. This chain is Bifunctional protein FolD, found in Sphingobium chlorophenolicum.